Here is a 239-residue protein sequence, read N- to C-terminus: Ribonuclease PH (239 aa).

Residues R86 and 124 to 126 (GTR) each bind phosphate.

Belongs to the RNase PH family. In terms of assembly, homohexameric ring arranged as a trimer of dimers.

It catalyses the reaction tRNA(n+1) + phosphate = tRNA(n) + a ribonucleoside 5'-diphosphate. Phosphorolytic 3'-5' exoribonuclease that plays an important role in tRNA 3'-end maturation. Removes nucleotide residues following the 3'-CCA terminus of tRNAs; can also add nucleotides to the ends of RNA molecules by using nucleoside diphosphates as substrates, but this may not be physiologically important. Probably plays a role in initiation of 16S rRNA degradation (leading to ribosome degradation) during starvation. In Rickettsia africae (strain ESF-5), this protein is Ribonuclease PH.